Here is a 79-residue protein sequence, read N- to C-terminus: Small ribosomal subunit protein bS16 (79 aa).

The protein belongs to the bacterial ribosomal protein bS16 family.

The polypeptide is Small ribosomal subunit protein bS16 (Marinobacter nauticus (strain ATCC 700491 / DSM 11845 / VT8) (Marinobacter aquaeolei)).